The sequence spans 303 residues: MLSTHLLFLATTLLTSLFHPIAAHVAKRSGSLQQITDFGDNPTGVGMYIYVPNNLASNPGIVVAIHYCTGTGPGYYSNSPYATLSEQYGFIVIYPSSPYSGGCWDVSSQATLTHNGGGNSNSIANMVTWTISEYGADSKKVYVTGSSSGAMMTNVMAATYPELFAAGTVYSGVSAGCFYSDTNQVDGWNSTCAQGDVITTPEHWASIAEAMYPGYSGSRPKMQIYHGSVDTTLYPQNYYETCKQWAGVFGYDYSAPESTEANTPQTNYETTIWGDNLQGIFATGVGHTVPIHGDKDMEWFGFA.

The first 23 residues, 1 to 23, serve as a signal peptide directing secretion; the sequence is MLSTHLLFLATTLLTSLFHPIAA. Residue Ser147 is the Charge relay system of the active site. Asn189 is a glycosylation site (N-linked (GlcNAc...) asparagine).

This sequence belongs to the carbohydrate esterase 1 (CE1) family. AxeA subfamily. In terms of assembly, monomer. Post-translationally, glycosylated.

The protein resides in the secreted. It catalyses the reaction Deacetylation of xylans and xylo-oligosaccharides.. Its pathway is glycan degradation; xylan degradation. Its function is as follows. Acetylxylan esterase involved in the hydrolysis of xylan, a major structural heterogeneous polysaccharide found in plant biomass representing the second most abundant polysaccharide in the biosphere, after cellulose. Degrades acetylated xylans by cleaving acetyl side groups from the hetero-xylan backbone. This chain is Acetylxylan esterase A (axeA), found in Aspergillus ficuum.